The sequence spans 60 residues: Large ribosomal subunit protein bL32 (60 aa).

Disordered stretches follow at residues 1–22 (MAVQ…HNAL) and 34–60 (GETH…KSEA). Positions 9–19 (SPSKRGMHRSH) are enriched in basic residues.

This sequence belongs to the bacterial ribosomal protein bL32 family.

This chain is Large ribosomal subunit protein bL32, found in Variovorax paradoxus (strain S110).